The following is a 48-amino-acid chain: Delta-actitoxin-Bgr2b (48 aa).

Disulfide bonds link Cys-4-Cys-45, Cys-6-Cys-35, and Cys-28-Cys-46.

The protein belongs to the sea anemone sodium channel inhibitory toxin family. Type I subfamily.

The protein resides in the secreted. It is found in the nematocyst. Functionally, binds voltage-dependently at site 3 of sodium channels (Nav) and inhibits the inactivation of the activated channels, thereby blocking neuronal transmission. Has effect on SCN4A/SCN1B, and SCN5A/SCN1B, has no effect on SCN2A/SCN1B, and SCN10A/SCN1B. Possesses the highest efficacy for the insect sodium channel para/tipE. Also interacts with sodium channels in cardiac cells. Shows lethality to crabs. This is Delta-actitoxin-Bgr2b from Bunodosoma granuliferum (Red warty sea anemone).